Reading from the N-terminus, the 177-residue chain is KxDL motif-containing protein 1 (177 aa).

Met-1 is subject to N-acetylmethionine. The tract at residues Ser-100 to Glu-177 is disordered. Positions Ala-125–Leu-145 are enriched in polar residues.

It belongs to the KXD1 family. Component of the BLOC-one-related complex (BORC) which is composed of BLOC1S1, BLOC1S2, BORCS5, BORCS6, BORCS7, BORCS8, KXD1 and SNAPIN. Associates with the BLOC-1 complex. Interacts with BLOC1S1. Interacts with DTNBP1/BLOC1S7 (via coiled-coil domain). As to expression, widely expressed.

It localises to the lysosome membrane. Functionally, as part of the BORC complex may play a role in lysosomes movement and localization at the cell periphery. Associated with the cytosolic face of lysosomes, the BORC complex may recruit ARL8B and couple lysosomes to microtubule plus-end-directed kinesin motor. May also be involved in the biogenesis of lysosome-related organelles such as melanosomes. The chain is KxDL motif-containing protein 1 (Kxd1) from Mus musculus (Mouse).